Consider the following 111-residue polypeptide: Large ribosomal subunit protein uL22 (111 aa).

Belongs to the universal ribosomal protein uL22 family. Part of the 50S ribosomal subunit.

Functionally, this protein binds specifically to 23S rRNA; its binding is stimulated by other ribosomal proteins, e.g. L4, L17, and L20. It is important during the early stages of 50S assembly. It makes multiple contacts with different domains of the 23S rRNA in the assembled 50S subunit and ribosome. The globular domain of the protein is located near the polypeptide exit tunnel on the outside of the subunit, while an extended beta-hairpin is found that lines the wall of the exit tunnel in the center of the 70S ribosome. This chain is Large ribosomal subunit protein uL22, found in Mycoplasma capricolum subsp. capricolum (strain California kid / ATCC 27343 / NCTC 10154).